We begin with the raw amino-acid sequence, 305 residues long: D-alanine--D-alanine ligase (305 aa).

Residues 105–300 (KMIWQAAGIN…FDELVVQILE (196 aa)) form the ATP-grasp domain. 131–186 (ADRLGLPLIIKPAREGSTLGLNKVDNEQDFRSAYQAAAEYDSLVLAEQFIQGIELT) contributes to the ATP binding site. Positions 254, 267, and 269 each coordinate Mg(2+).

The protein belongs to the D-alanine--D-alanine ligase family. It depends on Mg(2+) as a cofactor. Mn(2+) serves as cofactor.

It is found in the cytoplasm. It carries out the reaction 2 D-alanine + ATP = D-alanyl-D-alanine + ADP + phosphate + H(+). The protein operates within cell wall biogenesis; peptidoglycan biosynthesis. Functionally, cell wall formation. The sequence is that of D-alanine--D-alanine ligase from Nitrosomonas europaea (strain ATCC 19718 / CIP 103999 / KCTC 2705 / NBRC 14298).